A 324-amino-acid chain; its full sequence is UDP-N-acetylenolpyruvoylglucosamine reductase (324 aa).

Residues 36-217 form the FAD-binding PCMH-type domain; it reads FRAGGLAELM…IRAEMDAVRA (182 aa). The active site involves Arg183. Residue Ser232 is the Proton donor of the active site. Glu302 is a catalytic residue.

This sequence belongs to the MurB family. FAD is required as a cofactor.

The protein localises to the cytoplasm. The enzyme catalyses UDP-N-acetyl-alpha-D-muramate + NADP(+) = UDP-N-acetyl-3-O-(1-carboxyvinyl)-alpha-D-glucosamine + NADPH + H(+). It participates in cell wall biogenesis; peptidoglycan biosynthesis. In terms of biological role, cell wall formation. This chain is UDP-N-acetylenolpyruvoylglucosamine reductase, found in Rhizobium rhizogenes (strain K84 / ATCC BAA-868) (Agrobacterium radiobacter).